The primary structure comprises 21 residues: Thylakoid lumenal 13.8 kDa protein (21 aa).

Its subcellular location is the plastid. The protein localises to the chloroplast thylakoid lumen. The protein is Thylakoid lumenal 13.8 kDa protein of Spinacia oleracea (Spinach).